The primary structure comprises 615 residues: DNA mismatch repair protein MutL (615 aa).

The protein belongs to the DNA mismatch repair MutL/HexB family.

Its function is as follows. This protein is involved in the repair of mismatches in DNA. It is required for dam-dependent methyl-directed DNA mismatch repair. May act as a 'molecular matchmaker', a protein that promotes the formation of a stable complex between two or more DNA-binding proteins in an ATP-dependent manner without itself being part of a final effector complex. This Parabacteroides distasonis (strain ATCC 8503 / DSM 20701 / CIP 104284 / JCM 5825 / NCTC 11152) protein is DNA mismatch repair protein MutL.